The primary structure comprises 333 residues: Phosphate acyltransferase (333 aa).

It belongs to the PlsX family. As to quaternary structure, homodimer. Probably interacts with PlsY.

It localises to the cytoplasm. It carries out the reaction a fatty acyl-[ACP] + phosphate = an acyl phosphate + holo-[ACP]. Its pathway is lipid metabolism; phospholipid metabolism. Functionally, catalyzes the reversible formation of acyl-phosphate (acyl-PO(4)) from acyl-[acyl-carrier-protein] (acyl-ACP). This enzyme utilizes acyl-ACP as fatty acyl donor, but not acyl-CoA. This is Phosphate acyltransferase from Enterococcus faecalis (strain ATCC 700802 / V583).